The primary structure comprises 224 residues: Glutathione S-transferase U4 (224 aa).

The GST N-terminal domain occupies 6 to 85 (EDVKLLGFWA…YIDQIWKNNP (80 aa)). Glutathione contacts are provided by residues 16–17 (SP), 42–43 (NK), 56–57 (KV), and 69–70 (ES). A GST C-terminal domain is found at 90–217 (DPYEKAMALF…EEQIEHMKKV (128 aa)). Phosphothreonine is present on threonine 151.

The protein belongs to the GST superfamily. Tau family.

The protein resides in the cytoplasm. Its subcellular location is the cytosol. The catalysed reaction is RX + glutathione = an S-substituted glutathione + a halide anion + H(+). Functionally, may be involved in the conjugation of reduced glutathione to a wide number of exogenous and endogenous hydrophobic electrophiles and have a detoxification role against certain herbicides. The polypeptide is Glutathione S-transferase U4 (GSTU4) (Arabidopsis thaliana (Mouse-ear cress)).